We begin with the raw amino-acid sequence, 1320 residues long: Immunoglobulin superfamily member 1 (1320 aa).

The first 18 residues, 1–18 (MMLRTFTLLLLCIWLNRG), serve as a signal peptide directing secretion. Residues 19–504 (MTSMAAVESQ…LPWNSILNEA (486 aa)) lie on the Extracellular side of the membrane. Ig-like C2-type domains are found at residues 29-113 (PELW…KILE), 115-212 (EAPG…KLVV), 224-308 (HPGP…IWVT), 312-399 (PKTW…ATYN), and 401-482 (VELI…HRSE). N-linked (GlcNAc...) asparagine glycosylation is present at Asn-44. Cys-49 and Cys-97 are joined by a disulfide. Asn-329, Asn-365, and Asn-372 each carry an N-linked (GlcNAc...) asparagine glycan. 2 disulfide bridges follow: Cys-334/Cys-383 and Cys-423/Cys-466. A helical membrane pass occupies residues 505-525 (IRVSLTVQFLSLLLLVLWLQW). The Cytoplasmic portion of the chain corresponds to 526–534 (KCRRLRLRE). A helical membrane pass occupies residues 535 to 555 (AWLLGTAQGVAMLVILIALLC). The Extracellular portion of the chain corresponds to 556–1320 (CGLCNGALTE…GVSVEQTVPI (765 aa)). Ig-like C2-type domains lie at 572–665 (PTPK…VGTD), 662–756 (VGTD…ELVI), 761–853 (PKPF…LIVT), 857–942 (PKPT…YLST), 949–1044 (TDTF…ELIV), 1049–1134 (PKPS…NHSN), and 1145–1226 (PKPS…EPSD). Asn-591, Asn-731, Asn-782, Asn-830, Asn-874, Asn-923, Asn-970, Asn-1011, and Asn-1066 each carry an N-linked (GlcNAc...) asparagine glycan. The cysteines at positions 783 and 833 are disulfide-linked. Cys-879 and Cys-926 are disulfide-bonded. The cysteines at positions 1071 and 1118 are disulfide-linked. Asn-1131 and Asn-1207 each carry an N-linked (GlcNAc...) asparagine glycan. A disulfide bridge links Cys-1167 with Cys-1210.

Interacts with INHA; the interaction is not confirmed by standard receptor binding assays. Interacts with ACVR1B; the interaction appears to be ligand-dependent as it is diminished by inhibin B and activin A. Interacts with ACVR2A, ACVR2B, ACVRL1 and BMPR1B. Interacts with HECTD1. Expressed in pituitary gland, testis and liver. Isoform 2 is expressed pituitary gland and testis.

The protein localises to the membrane. Its subcellular location is the secreted. Its function is as follows. Seems to be a coreceptor in inhibin signaling, but seems not to be a high-affinity inhibin receptor. Antagonizes activin A signaling in the presence or absence of inhibin B. Necessary to mediate a specific antagonistic effect of inhibin B on activin-stimulated transcription. In Rattus norvegicus (Rat), this protein is Immunoglobulin superfamily member 1 (Igsf1).